The sequence spans 576 residues: Arginine--tRNA ligase (576 aa).

The short motif at 126–136 (ANPTGPMHIGH) is the 'HIGH' region element.

It belongs to the class-I aminoacyl-tRNA synthetase family. As to quaternary structure, monomer.

It is found in the cytoplasm. The catalysed reaction is tRNA(Arg) + L-arginine + ATP = L-arginyl-tRNA(Arg) + AMP + diphosphate. This is Arginine--tRNA ligase from Rickettsia africae (strain ESF-5).